Consider the following 273-residue polypeptide: Large ribosomal subunit protein uL2cz/uL2cy (273 aa).

Disordered regions lie at residues 1–22 and 223–254; these read MAIH…DSQV and MNPV…PALG.

It belongs to the universal ribosomal protein uL2 family. Part of the 50S ribosomal subunit.

The protein localises to the plastid. It is found in the chloroplast. The protein is Large ribosomal subunit protein uL2cz/uL2cy (rpl2-A) of Drimys granadensis.